Reading from the N-terminus, the 574-residue chain is Putative ABC transporter ATP-binding protein VV2_1533 (574 aa).

2 consecutive ABC transporter domains span residues Ile-3–Glu-244 and Leu-299–Thr-533. ATP-binding positions include Gly-37–Ser-44 and Gly-332–Ser-339.

It belongs to the ABC transporter superfamily.

It is found in the cell inner membrane. Probably part of an ABC transporter complex. Responsible for energy coupling to the transport system. In Vibrio vulnificus (strain CMCP6), this protein is Putative ABC transporter ATP-binding protein VV2_1533.